The primary structure comprises 379 residues: Cytochrome b (379 aa).

4 helical membrane passes run 33-53 (FGSLLGACLTIQIITGLFLAM), 77-98 (WTIRYLHANGASLFFLCLFIHV), 113-133 (WNIGIMLLFSVMATAFMGYVL), and 178-198 (FFALHFILPFIISALTMIHLL). Heme b is bound by residues histidine 83 and histidine 97. The heme b site is built by histidine 182 and histidine 196. Histidine 201 contacts a ubiquinone. The next 4 helical transmembrane spans lie at 226-246 (TKDFLGLLLLILLLMTLTLFY), 288-308 (LGGVVALIMSILILAIMPFLQ), 320-340 (LSQFLFWILVADLLTLTWIGG), and 347-367 (FINIGQMASILYFSLMVFIMP).

Belongs to the cytochrome b family. In terms of assembly, the cytochrome bc1 complex contains 11 subunits: 3 respiratory subunits (MT-CYB, CYC1 and UQCRFS1), 2 core proteins (UQCRC1 and UQCRC2) and 6 low-molecular weight proteins (UQCRH/QCR6, UQCRB/QCR7, UQCRQ/QCR8, UQCR10/QCR9, UQCR11/QCR10 and a cleavage product of UQCRFS1). This cytochrome bc1 complex then forms a dimer. Heme b is required as a cofactor.

The protein localises to the mitochondrion inner membrane. Its function is as follows. Component of the ubiquinol-cytochrome c reductase complex (complex III or cytochrome b-c1 complex) that is part of the mitochondrial respiratory chain. The b-c1 complex mediates electron transfer from ubiquinol to cytochrome c. Contributes to the generation of a proton gradient across the mitochondrial membrane that is then used for ATP synthesis. This is Cytochrome b (MT-CYB) from Lepilemur aeeclis (Sportive lemur).